A 357-amino-acid polypeptide reads, in one-letter code: CD4+ T-cell-stimulating antigen (357 aa).

The first 22 residues, 1 to 22, serve as a signal peptide directing secretion; it reads MKKRTFALALSMIIASGVVLGA. The N-palmitoyl cysteine moiety is linked to residue cysteine 23. The S-diacylglycerol cysteine moiety is linked to residue cysteine 23.

This sequence belongs to the BMP lipoprotein family.

Its subcellular location is the cell membrane. In Listeria innocua serovar 6a (strain ATCC BAA-680 / CLIP 11262), this protein is CD4+ T-cell-stimulating antigen (tcsA).